Here is a 122-residue protein sequence, read N- to C-terminus: Large ribosomal subunit protein uL14c (122 aa).

Belongs to the universal ribosomal protein uL14 family. As to quaternary structure, part of the 50S ribosomal subunit.

The protein resides in the plastid. It localises to the chloroplast. Its function is as follows. Binds to 23S rRNA. The sequence is that of Large ribosomal subunit protein uL14c from Pyropia yezoensis (Susabi-nori).